A 139-amino-acid chain; its full sequence is Hydrogenase maturation factor HypA (139 aa).

Positions 1 and 2 each coordinate Ni(2+). Zn(2+) is bound by residues Cys73 and Cys76. His98 is a Ni(2+) binding site. The Zn(2+) site is built by Cys110 and Cys113.

The protein belongs to the HypA/HybF family. In terms of assembly, monomer and homodimer. Could also form hexamers. Forms a complex with HypB.

Its function is as follows. Involved in the maturation of [NiFe] hydrogenases. Required for nickel insertion into the metal center of the hydrogenase. This chain is Hydrogenase maturation factor HypA, found in Thermococcus kodakarensis (strain ATCC BAA-918 / JCM 12380 / KOD1) (Pyrococcus kodakaraensis (strain KOD1)).